The following is a 500-amino-acid chain: L-arabinose isomerase (500 aa).

Mn(2+) contacts are provided by E306, E333, H350, and H450.

It belongs to the arabinose isomerase family. As to quaternary structure, homohexamer. Requires Mn(2+) as cofactor.

The enzyme catalyses beta-L-arabinopyranose = L-ribulose. The protein operates within carbohydrate degradation; L-arabinose degradation via L-ribulose; D-xylulose 5-phosphate from L-arabinose (bacterial route): step 1/3. Its function is as follows. Catalyzes the conversion of L-arabinose to L-ribulose. This is L-arabinose isomerase from Klebsiella pneumoniae (strain 342).